The sequence spans 354 residues: Uroporphyrinogen decarboxylase (354 aa).

Substrate-binding positions include 27-31 (RQAGR), Asp-77, Tyr-154, Thr-209, and His-327.

It belongs to the uroporphyrinogen decarboxylase family. As to quaternary structure, homodimer.

The protein resides in the cytoplasm. The catalysed reaction is uroporphyrinogen III + 4 H(+) = coproporphyrinogen III + 4 CO2. Its pathway is porphyrin-containing compound metabolism; protoporphyrin-IX biosynthesis; coproporphyrinogen-III from 5-aminolevulinate: step 4/4. In terms of biological role, catalyzes the decarboxylation of four acetate groups of uroporphyrinogen-III to yield coproporphyrinogen-III. This chain is Uroporphyrinogen decarboxylase, found in Escherichia fergusonii (strain ATCC 35469 / DSM 13698 / CCUG 18766 / IAM 14443 / JCM 21226 / LMG 7866 / NBRC 102419 / NCTC 12128 / CDC 0568-73).